The following is a 560-amino-acid chain: Formate--tetrahydrofolate ligase (560 aa).

69 to 76 (TPAGEGKS) is a binding site for ATP.

The protein belongs to the formate--tetrahydrofolate ligase family.

It catalyses the reaction (6S)-5,6,7,8-tetrahydrofolate + formate + ATP = (6R)-10-formyltetrahydrofolate + ADP + phosphate. Its pathway is one-carbon metabolism; tetrahydrofolate interconversion. This Listeria welshimeri serovar 6b (strain ATCC 35897 / DSM 20650 / CCUG 15529 / CIP 8149 / NCTC 11857 / SLCC 5334 / V8) protein is Formate--tetrahydrofolate ligase.